The primary structure comprises 702 residues: Elongation factor G 2 (702 aa).

Positions 8–285 constitute a tr-type G domain; it reads DMVRNIGISA…AVTYYLPSPA (278 aa). GTP-binding positions include 17–24, 84–88, and 138–141; these read AHIDSGKT, DTPGH, and NKLD.

It belongs to the TRAFAC class translation factor GTPase superfamily. Classic translation factor GTPase family. EF-G/EF-2 subfamily.

The protein resides in the cytoplasm. Its function is as follows. Catalyzes the GTP-dependent ribosomal translocation step during translation elongation. During this step, the ribosome changes from the pre-translocational (PRE) to the post-translocational (POST) state as the newly formed A-site-bound peptidyl-tRNA and P-site-bound deacylated tRNA move to the P and E sites, respectively. Catalyzes the coordinated movement of the two tRNA molecules, the mRNA and conformational changes in the ribosome. This is Elongation factor G 2 from Bdellovibrio bacteriovorus (strain ATCC 15356 / DSM 50701 / NCIMB 9529 / HD100).